The following is a 174-amino-acid chain: Cytochrome c-type biogenesis protein CcmE (174 aa).

The Cytoplasmic segment spans residues 1–8 (MNPRRKSR). The helical; Signal-anchor for type II membrane protein transmembrane segment at 9-29 (LSVVLFILLGISVASALVLYA) threads the bilayer. The Periplasmic segment spans residues 30 to 174 (LRQNIDLFYT…QEKQFKEGNQ (145 aa)). 2 residues coordinate heme: His-131 and Tyr-135. The interval 149-174 (KPMGISDLKNESDRDRQEKQFKEGNQ) is disordered. The span at 156–174 (LKNESDRDRQEKQFKEGNQ) shows a compositional bias: basic and acidic residues.

Belongs to the CcmE/CycJ family.

The protein resides in the cell inner membrane. Its function is as follows. Heme chaperone required for the biogenesis of c-type cytochromes. Transiently binds heme delivered by CcmC and transfers the heme to apo-cytochromes in a process facilitated by CcmF and CcmH. In Histophilus somni (strain 2336) (Haemophilus somnus), this protein is Cytochrome c-type biogenesis protein CcmE.